A 642-amino-acid polypeptide reads, in one-letter code: MRERAQEYDASQIQVLEGLEAVRKRPGMYIGSTSGEGLHHLVWEIVDNSIDEALAGFAKSIQVIIEPDDSITVIDDGRGIPVGIQAKTGRPAVETVFTVLHAGGKFGGGGYKVSGGLHGVGSSVVNALSTSLDVRVYKDGKVYYQEYRRGAVVDDLKVIEETDRHGTTVHFIPDPEIFTETTVYDFDKLATRVRELAFLNRGLHISIEDRREGQEDKKEYHYEGGIKSYVEHLNANKDVIFPEPIFIEGEQQDITVEVSMQYTDGYHSNILSFANNIHTYEGGTHESGFKTSLTRVINDYARKQKLMKENDEKLTGEDVREGLTAVVSIKHPDPQFEGQTKTKLGNSEVRTVTDRLFSEYFTKFLMENPTVGKQIVEKGMLASKARLAAKRAREVTRRKGALEISNLPGKLADCSSKDPEKCELFIVEGDSAGGSAKQGRSREFQAILPIRGKILNVEKASMDKILANEEIRSLFTAMGTGFGEDFDVSKARYHKLVIMTDADVDGAHIRTLLLTLFYRFMRPIVEAGYVYIAQPPLYGVKQGKNITYVQPGKHAEEELAKVLEELPASPKPSVQRYKGLGEMDDHQLWETTMDPEKRLMARVSVDDAIEADQIFEMLMGDRVEPRRAFIEENAHYVKNLDI.

Residues 422-536 enclose the Toprim domain; the sequence is CELFIVEGDS…AGYVYIAQPP (115 aa). Mg(2+) is bound by residues Glu-428, Asp-501, and Asp-503.

This sequence belongs to the type II topoisomerase family. As to quaternary structure, heterotetramer, composed of two GyrA and two GyrB chains. Within the heterotetramer, GyrA contains the active site tyrosine that forms a covalent intermediate with the DNA, while GyrB contributes the cofactor binding sites and catalyzes ATP hydrolysis. It depends on Mg(2+) as a cofactor. Mn(2+) is required as a cofactor. The cofactor is Ca(2+).

The protein resides in the cytoplasm. The catalysed reaction is ATP-dependent breakage, passage and rejoining of double-stranded DNA.. With respect to regulation, pyrrolopyrimidines inhibit both GyrB and its paralog in topoisomerase IV (parE). Functionally, DNA gyrase negatively supercoils closed circular double-stranded DNA in an ATP-dependent manner and also catalyzes the interconversion of other topological isomers of double-stranded DNA rings, including catenanes and knotted rings. This Enterococcus faecalis (strain ATCC 700802 / V583) protein is DNA gyrase subunit B.